The primary structure comprises 422 residues: Roquefortine prenyltransferase roqD (422 aa).

Glu100 lines the substrate pocket. The dimethylallyl diphosphate site is built by Arg113, Lys200, and Tyr202. Substrate is bound at residue Tyr204. The dimethylallyl diphosphate site is built by Lys268, Tyr270, Tyr353, Tyr416, and Tyr420.

It belongs to the tryptophan dimethylallyltransferase family.

Its pathway is alkaloid biosynthesis. Its function is as follows. Roquefortine prenyltransferase; part of the gene cluster that mediates the biosynthesis of the mycotoxins roquefortine C and meleagrin. The first stage is catalyzed by the dipeptide synthase roqA which condenses histidine and tryptophan to produce histidyltryptophanyldiketopiperazine (HTD). HTD is then converted to roquefortine C through two possible pathways. In the first pathway, prenyltransferase roqD transforms HTD to the intermediate roquefortine D, which is in turn converted to roquefortine C by the cytochrome P450 monooxygenase roqR. In the second pathway, HTD is first converted to the intermediate dehydrohistidyltryptophanyldi-ketopiperazine (DHTD) by roqR which is then prenylated by roqD to form roquefortine C. Roquefortine C can be further transformed to meleagrin via three more reactions including oxydation to glandicolin A by roqM, which is further reduced to glandicoline B by roqO. Finally, glandicoline B is converted to meleagrin by the glandicoline B O-methyltransferase roqN. More studies identified further branching and additional metabolites produced by the roquefortine/meleagrin cluster, including roquefortine F, roquefortine L, roquefortine M, roquefortine N and neoxaline. This is Roquefortine prenyltransferase roqD from Penicillium rubens (strain ATCC 28089 / DSM 1075 / NRRL 1951 / Wisconsin 54-1255) (Penicillium chrysogenum).